The following is a 153-amino-acid chain: Transcription antitermination protein NusB (153 aa).

The protein belongs to the NusB family.

Functionally, involved in transcription antitermination. Required for transcription of ribosomal RNA (rRNA) genes. Binds specifically to the boxA antiterminator sequence of the ribosomal RNA (rrn) operons. The protein is Transcription antitermination protein NusB of Fusobacterium nucleatum subsp. nucleatum (strain ATCC 25586 / DSM 15643 / BCRC 10681 / CIP 101130 / JCM 8532 / KCTC 2640 / LMG 13131 / VPI 4355).